A 511-amino-acid polypeptide reads, in one-letter code: Coatomer subunit delta (511 aa).

A compositionally biased stretch (basic and acidic residues) spans 168–177; sequence QARRDAERQG. Residues 168-196 form a disordered region; the sequence is QARRDAERQGKKAPGFGGFGSSTVSGGST. Ser223 carries the phosphoserine modification. An N6-acetyllysine mark is found at Lys233 and Lys241. Position 244 is a phosphoserine (Ser244). Residues 271–511 form the MHD domain; it reads MESVHMKIEE…TFLVDKYEIL (241 aa). 2 positions are modified to N6-acetyllysine: Lys309 and Lys351. Phosphoserine is present on Ser493.

This sequence belongs to the adaptor complexes medium subunit family. Delta-COP subfamily. In terms of assembly, oligomeric complex that consists of at least the alpha, beta, beta', gamma, delta, epsilon and zeta subunits. In terms of tissue distribution, ubiquitously expressed.

It localises to the cytoplasm. The protein localises to the golgi apparatus membrane. It is found in the cytoplasmic vesicle. The protein resides in the COPI-coated vesicle membrane. The coatomer is a cytosolic protein complex that binds to dilysine motifs and reversibly associates with Golgi non-clathrin-coated vesicles, which further mediate biosynthetic protein transport from the ER, via the Golgi up to the trans Golgi network. Coatomer complex is required for budding from Golgi membranes, and is essential for the retrograde Golgi-to-ER transport of dilysine-tagged proteins. In mammals, the coatomer can only be recruited by membranes associated to ADP-ribosylation factors (ARFs), which are small GTP-binding proteins; the complex also influences the Golgi structural integrity, as well as the processing, activity, and endocytic recycling of LDL receptors. This Bos taurus (Bovine) protein is Coatomer subunit delta (ARCN1).